The following is a 394-amino-acid chain: Actin-related protein 2-A (394 aa).

Residues Gly-160–Gly-162, Arg-214–Glu-218, and Gly-305–Tyr-310 each bind ATP.

It belongs to the actin family. ARP2 subfamily. As to quaternary structure, component of the Arp2/3 complex composed of actr2/arp2, actr3/arp3, arpc1b, arpc2, arpc3, arpc4 and arpc5.

The protein localises to the cytoplasm. Its subcellular location is the cytoskeleton. The protein resides in the cell projection. It is found in the nucleus. Functionally, ATP-binding component of the Arp2/3 complex, a multiprotein complex that mediates actin polymerization upon stimulation by nucleation-promoting factor (NPF). The Arp2/3 complex mediates the formation of branched actin networks in the cytoplasm, providing the force for cell motility. Seems to contact the pointed end of the daughter actin filament. In addition to its role in the cytoplasmic cytoskeleton, the Arp2/3 complex also promotes actin polymerization in the nucleus, thereby regulating gene transcription and repair of damaged DNA. The Arp2/3 complex promotes homologous recombination (HR) repair in response to DNA damage by promoting nuclear actin polymerization, leading to drive motility of double-strand breaks (DSBs). This Danio rerio (Zebrafish) protein is Actin-related protein 2-A (actr2a).